We begin with the raw amino-acid sequence, 156 residues long: Small ribosomal subunit protein uS7 (156 aa).

It belongs to the universal ribosomal protein uS7 family. In terms of assembly, part of the 30S ribosomal subunit. Contacts proteins S9 and S11.

One of the primary rRNA binding proteins, it binds directly to 16S rRNA where it nucleates assembly of the head domain of the 30S subunit. Is located at the subunit interface close to the decoding center, probably blocks exit of the E-site tRNA. This Vibrio parahaemolyticus serotype O3:K6 (strain RIMD 2210633) protein is Small ribosomal subunit protein uS7.